Here is a 205-residue protein sequence, read N- to C-terminus: Ras-related protein Rab-1A (205 aa).

Position 2 is an N-acetylserine (S2). Residues S20, G21, G23, K24, S25, C26, E38, and T43 each coordinate GTP. A Mg(2+)-binding site is contributed by S25. Residues 34-48 (DTYTESYISTIGVDF) carry the Switch 1 motif. Residue T43 participates in Mg(2+) binding. Residues K49 and K61 each participate in a glycyl lysine isopeptide (Lys-Gly) (interchain with G-Cter in ubiquitin) cross-link. Residue D66 participates in Mg(2+) binding. The Switch 2 signature appears at 66-83 (DTAGQERFRTITSSYYRG). Positions 69, 124, 125, 127, 155, and 156 each coordinate GTP. The tract at residues 178–205 (PGATAGGAEKSNVKIQSTPVKQSGGGCC) is disordered. The residue at position 194 (S194) is a Phosphoserine; by CDK1. Residues C204 and C205 are each lipidated (S-geranylgeranyl cysteine).

The protein belongs to the small GTPase superfamily. Rab family. In terms of assembly, may interact with YIPF5. Interacts with C9orf72; the interaction mediates recruitment of RAB1A to the ATG1/ULK1 kinase complex. Interacts with GDI1; this promotes dissociation from membranes. It depends on Mg(2+) as a cofactor. Post-translationally, phosphorylated by CDK1 kinase during mitosis. In terms of processing, ubiquitinated via 'Lys-11'-linked ubiquitination on Lys-49 and Lys-61; impairing the recruitment of guanosine diphosphate (GDP) dissociation inhibitor 1/GDI1.

It localises to the golgi apparatus. It is found in the endoplasmic reticulum. The protein localises to the early endosome. The protein resides in the cytoplasm. Its subcellular location is the cytosol. It localises to the membrane. It is found in the melanosome. It catalyses the reaction GTP + H2O = GDP + phosphate + H(+). With respect to regulation, regulated by guanine nucleotide exchange factors (GEFs) which promote the exchange of bound GDP for free GTP. Regulated by GTPase activating proteins (GAPs) which increase the GTP hydrolysis activity. Inhibited by GDP dissociation inhibitors (GDIs). Functionally, the small GTPases Rab are key regulators of intracellular membrane trafficking, from the formation of transport vesicles to their fusion with membranes. Rabs cycle between an inactive GDP-bound form and an active GTP-bound form that is able to recruit to membranes different sets of downstream effectors directly responsible for vesicle formation, movement, tethering and fusion. RAB1A regulates vesicular protein transport from the endoplasmic reticulum (ER) to the Golgi compartment and on to the cell surface, and plays a role in IL-8 and growth hormone secretion. Required to modulate the compacted morphology of the Golgi. Regulates the level of CASR present at the cell membrane. Plays a role in cell adhesion and cell migration, via its role in protein trafficking. Plays a role in autophagosome assembly and cellular defense reactions against pathogenic bacteria. Plays a role in microtubule-dependent protein transport by early endosomes and in anterograde melanosome transport. This is Ras-related protein Rab-1A (RAB1A) from Sus scrofa (Pig).